The primary structure comprises 709 residues: Fatty acid oxidation complex subunit alpha (709 aa).

Positions 1–188 are enoyl-CoA hydratase; that stretch reads MEKTFNLTRR…KMGLVNDVVP (188 aa). Positions 308 to 709 are 3-hydroxyacyl-CoA dehydrogenase; it reads RKVKKAVILG…AMAAEKARFF (402 aa).

It in the N-terminal section; belongs to the enoyl-CoA hydratase/isomerase family. This sequence in the central section; belongs to the 3-hydroxyacyl-CoA dehydrogenase family. Heterotetramer of two alpha chains (FadJ) and two beta chains (FadI).

The protein resides in the cytoplasm. The enzyme catalyses a (3S)-3-hydroxyacyl-CoA = a (2E)-enoyl-CoA + H2O. It catalyses the reaction a 4-saturated-(3S)-3-hydroxyacyl-CoA = a (3E)-enoyl-CoA + H2O. It carries out the reaction a (3S)-3-hydroxyacyl-CoA + NAD(+) = a 3-oxoacyl-CoA + NADH + H(+). The catalysed reaction is (3S)-3-hydroxybutanoyl-CoA = (3R)-3-hydroxybutanoyl-CoA. Its pathway is lipid metabolism; fatty acid beta-oxidation. In terms of biological role, catalyzes the formation of a hydroxyacyl-CoA by addition of water on enoyl-CoA. Also exhibits 3-hydroxyacyl-CoA epimerase and 3-hydroxyacyl-CoA dehydrogenase activities. This is Fatty acid oxidation complex subunit alpha from Shewanella sp. (strain ANA-3).